A 359-amino-acid polypeptide reads, in one-letter code: Guanine nucleotide-binding protein subunit alpha-11 (359 aa).

2 S-palmitoyl cysteine lipidation sites follow: C9 and C10. The 322-residue stretch at 38 to 359 (RELKLLLLGT…QLNLKEYNLV (322 aa)) folds into the G-alpha domain. Positions 41 to 54 (KLLLLGTGESGKST) are G1 motif. GTP contacts are provided by residues 46-53 (GTGESGKS) and 180-183 (LRVR). Position 53 (S53) interacts with Mg(2+). The interval 178–186 (DVLRVRVPT) is G2 motif. Mg(2+) is bound at residue T186. Positions 201–210 (FRMVDVGGQR) are G3 motif. The tract at residues 270-277 (ILFLNKKD) is G4 motif. GTP contacts are provided by residues 274–277 (NKKD) and A331. Positions 329–334 (TCATDT) are G5 motif.

It belongs to the G-alpha family. G(q) subfamily. In terms of assembly, g proteins are composed of 3 units; alpha, beta and gamma. The alpha chain contains the guanine nucleotide binding site. Interacts with RGS22. Interacts with NTSR1.

It localises to the cell membrane. Its subcellular location is the cytoplasm. The enzyme catalyses GTP + H2O = GDP + phosphate + H(+). In terms of biological role, guanine nucleotide-binding proteins (G proteins) function as transducers downstream of G protein-coupled receptors (GPCRs) in numerous signaling cascades. The alpha chain contains the guanine nucleotide binding site and alternates between an active, GTP-bound state and an inactive, GDP-bound state. Signaling by an activated GPCR promotes GDP release and GTP binding. The alpha subunit has a low GTPase activity that converts bound GTP to GDP, thereby terminating the signal. Both GDP release and GTP hydrolysis are modulated by numerous regulatory proteins. Signaling is mediated via phospholipase C-beta-dependent inositol lipid hydrolysis for signal propagation: activates phospholipase C-beta: following GPCR activation, GNA11 activates PLC-beta (PLCB1, PLCB2, PLCB3 or PLCB4), leading to production of diacylglycerol (DAG) and inositol 1,4,5-trisphosphate (IP3). Transduces FFAR4 signaling in response to long-chain fatty acids (LCFAs). Together with GNAQ, required for heart development. In the respiratory epithelium, transmits OXGR1-dependent signals that lead to downstream intracellular Ca(2+) release and mucocilliary clearance of airborne pathogens. The sequence is that of Guanine nucleotide-binding protein subunit alpha-11 (Gna11) from Rattus norvegicus (Rat).